Consider the following 595-residue polypeptide: Anthranilate synthase alpha subunit 1, chloroplastic (595 aa).

The N-terminal 54 residues, 1 to 54, are a transit peptide targeting the chloroplast; the sequence is MSSSMNVATMQALTFSRRLLPSVASRYLSSSSVTVTGYSGRSSAYAPSFRSIKC. Val55 is modified (N-acetylvaline). Residues Ser115 and 356–358 each bind L-tryptophan; that span reads PYM. 391 to 392 lines the chorismate pocket; it reads GT. A Mg(2+)-binding site is contributed by Glu418. Chorismate is bound by residues Tyr506, Arg526, 558–560, and Gly560; that span reads GAG. Glu573 is a binding site for Mg(2+).

It belongs to the anthranilate synthase component I family. In terms of assembly, heterotetramer consisting of two non-identical subunits: a beta subunit and a large alpha subunit. Requires Mg(2+) as cofactor. As to expression, expressed in the central cylinder of mature primary root zones, including pericycle and early lateral root primordia, and vasculature of cotyledons.

The protein resides in the plastid. The protein localises to the chloroplast. The enzyme catalyses chorismate + L-glutamine = anthranilate + pyruvate + L-glutamate + H(+). The protein operates within amino-acid biosynthesis; L-tryptophan biosynthesis; L-tryptophan from chorismate: step 1/5. Its activity is regulated as follows. Feedback inhibition by tryptophan. Part of a heterotetrameric complex that catalyzes the two-step biosynthesis of anthranilate, an intermediate in the biosynthesis of L-tryptophan. In the first step, the glutamine-binding beta subunit of anthranilate synthase (AS) provides the glutamine amidotransferase activity which generates ammonia as a substrate that, along with chorismate, is used in the second step, catalyzed by the large alpha subunit of AS to produce anthranilate. Plays an important regulatory role in auxin production via the tryptophan-dependent biosynthetic pathway. The chain is Anthranilate synthase alpha subunit 1, chloroplastic (ASA1) from Arabidopsis thaliana (Mouse-ear cress).